The chain runs to 178 residues: Large ribosomal subunit protein uL6 (178 aa).

This sequence belongs to the universal ribosomal protein uL6 family. In terms of assembly, part of the 50S ribosomal subunit.

Its function is as follows. This protein binds to the 23S rRNA, and is important in its secondary structure. It is located near the subunit interface in the base of the L7/L12 stalk, and near the tRNA binding site of the peptidyltransferase center. This Frankia casuarinae (strain DSM 45818 / CECT 9043 / HFP020203 / CcI3) protein is Large ribosomal subunit protein uL6.